We begin with the raw amino-acid sequence, 269 residues long: Glutamate 5-kinase 2 (269 aa).

Lys16 contacts ATP. Substrate is bound by residues Ser57, Asp144, and Asn156. An ATP-binding site is contributed by 218–224 (SGGMISK).

This sequence belongs to the glutamate 5-kinase family.

Its subcellular location is the cytoplasm. It carries out the reaction L-glutamate + ATP = L-glutamyl 5-phosphate + ADP. It participates in amino-acid biosynthesis; L-proline biosynthesis; L-glutamate 5-semialdehyde from L-glutamate: step 1/2. Functionally, catalyzes the transfer of a phosphate group to glutamate to form L-glutamate 5-phosphate. This Rhizobium meliloti (strain 1021) (Ensifer meliloti) protein is Glutamate 5-kinase 2.